The primary structure comprises 336 residues: Pyridoxal 5'-phosphate synthase subunit PdxS (336 aa).

D-ribose 5-phosphate is bound at residue Asp-30. Lys-87 acts as the Schiff-base intermediate with D-ribose 5-phosphate in catalysis. Gly-159 is a D-ribose 5-phosphate binding site. A D-glyceraldehyde 3-phosphate-binding site is contributed by Arg-171. Residues Gly-257 and 278–279 (GS) each bind D-ribose 5-phosphate.

This sequence belongs to the PdxS/SNZ family. As to quaternary structure, in the presence of PdxT, forms a dodecamer of heterodimers.

The catalysed reaction is aldehydo-D-ribose 5-phosphate + D-glyceraldehyde 3-phosphate + L-glutamine = pyridoxal 5'-phosphate + L-glutamate + phosphate + 3 H2O + H(+). The protein operates within cofactor biosynthesis; pyridoxal 5'-phosphate biosynthesis. Its function is as follows. Catalyzes the formation of pyridoxal 5'-phosphate from ribose 5-phosphate (RBP), glyceraldehyde 3-phosphate (G3P) and ammonia. The ammonia is provided by the PdxT subunit. Can also use ribulose 5-phosphate and dihydroxyacetone phosphate as substrates, resulting from enzyme-catalyzed isomerization of RBP and G3P, respectively. The protein is Pyridoxal 5'-phosphate synthase subunit PdxS of Thermoplasma acidophilum (strain ATCC 25905 / DSM 1728 / JCM 9062 / NBRC 15155 / AMRC-C165).